Reading from the N-terminus, the 481-residue chain is Matrilin-3 (481 aa).

Positions 1–27 are cleaved as a signal peptide; that stretch reads MLLSAPLRHLPGLLLLLWPLLLLPSLA. One can recognise a VWFA domain in the interval 78-253; that stretch reads DLVFIIDSSR…GVIEKLSARF (176 aa). Residue Arg193 is modified to Omega-N-methylarginine. EGF-like domains lie at 259-300, 301-342, 343-384, and 385-426; these read ALDQ…KTCS, AIDK…RTCA, ALDK…KTCS, and VRNK…KTCS. Disulfide bonds link Cys263–Cys274, Cys270–Cys284, Cys286–Cys299, Cys305–Cys316, Cys312–Cys326, Cys328–Cys341, Cys347–Cys358, Cys354–Cys368, Cys370–Cys383, Cys389–Cys400, Cys396–Cys410, and Cys412–Cys425. Asn321 is a glycosylation site (N-linked (GlcNAc...) asparagine). Ser436 carries the phosphoserine; by FAM20C modification. Positions 451–475 form a coiled coil; that stretch reads EKVSSHLQKLNTKLDNILKKLKVTE.

In terms of assembly, can form homooligomers (monomers, dimers, trimers and tetramers) and heterooligomers with matrilin-1. Interacts with COMP. Component of a complex containing at least CRELD2, MANF, MATN3 and PDIA4. In terms of tissue distribution, strongly expressed in growing skeletal tissue such as epiphyseal growth plate or in bone undergoing growth and remodeling. In the bone, actively synthesized in osteoblasts and osteocytes. Expressed in cartilage of sternum, femur, vertebrae, trachea, articular and epiphyseal cartilage, cartilage of developing bones and bones.

The protein localises to the secreted. Major component of the extracellular matrix of cartilage and may play a role in the formation of extracellular filamentous networks. In Mus musculus (Mouse), this protein is Matrilin-3 (Matn3).